Reading from the N-terminus, the 123-residue chain is Angiogenin-2 (123 aa).

Residue glutamine 1 is modified to Pyrrolidone carboxylic acid. The active-site Proton acceptor is histidine 12. Intrachain disulfides connect cysteine 25–cysteine 80, cysteine 38–cysteine 91, and cysteine 56–cysteine 106. A Nucleolar localization signal motif is present at residues 30-34; that stretch reads ERRNM. Asparagine 33 is a glycosylation site (N-linked (GlcNAc...) asparagine). Zn(2+)-binding residues include aspartate 40, histidine 82, and histidine 113. The active-site Proton donor is histidine 113.

The protein belongs to the pancreatic ribonuclease family. As to expression, serum and milk.

Its subcellular location is the cytoplasmic vesicle. It is found in the secretory vesicle lumen. The protein localises to the secreted. The protein resides in the nucleus. It localises to the nucleolus. With respect to regulation, divalent metal ions, such as Cu2+ and Zn2+, may inhibit the ribonucleolytic activity. Functionally, binds tightly to placental ribonuclease inhibitor and has very low ribonuclease activity. Has potent angiogenic activity. Angiogenin induces vascularization of normal and malignant tissues. Abolishes protein synthesis by specifically hydrolyzing cellular tRNAs. This Bos taurus (Bovine) protein is Angiogenin-2.